The sequence spans 349 residues: T-cell immunoglobulin and mucin domain-containing protein 2 (349 aa).

An N-terminal signal peptide occupies residues 1–20; it reads MVQLQVFISGLLLLLPGAVA. The Extracellular portion of the chain corresponds to 21–275; sequence SYTVVQGHSV…QKLQRNPTKG (255 aa). The region spanning 22–123 is the Ig-like V-type domain; that stretch reads YTVVQGHSVT…AFYFVDYLLE (102 aa). Cystine bridges form between cysteine 34-cysteine 107, cysteine 48-cysteine 59, and cysteine 54-cysteine 106. N-linked (GlcNAc...) asparagine glycosylation is found at asparagine 84 and asparagine 89. Residues 128 to 271 form a disordered region; the sequence is LPTSPPTRPT…AIPPQKLQRN (144 aa). Over residues 136-215 the composition is skewed to low complexity; the sequence is PTNTGRPTTT…TSTPPTPEQT (80 aa). Polar residues predominate over residues 222–260; that stretch reads ATTYYPDQTTAEVTEAPSHTPTDWNNTATSSDDSWNSDT. The chain crosses the membrane as a helical span at residues 276–296; the sequence is FYVGMSFAALLLLLLASTVAI. At 297-349 the chain is on the cytoplasmic side; it reads TRYMVMRKNSGSLRFVAFPVSKIGASQNKVVEQARIEDEVYIIEDSPYFEEES.

The protein belongs to the immunoglobulin superfamily. TIM family. Homodimer.

It localises to the cell membrane. In terms of biological role, probable receptor for SEMA4A involved in the regulation of T-cell function. The interaction with SEMA4A enhances T-cell activation. The sequence is that of T-cell immunoglobulin and mucin domain-containing protein 2 (Timd2) from Rattus norvegicus (Rat).